Here is a 1075-residue protein sequence, read N- to C-terminus: Putative type I restriction enzyme MjaVIIP endonuclease subunit (1075 aa).

It belongs to the HsdR family. In terms of assembly, the type I restriction/modification system is composed of three polypeptides R, M and S.

The catalysed reaction is Endonucleolytic cleavage of DNA to give random double-stranded fragments with terminal 5'-phosphates, ATP is simultaneously hydrolyzed.. The restriction (R) subunit of a type I restriction enzyme that recognizes 5'-CAAN(7)TGG-3' and cleaves a random distance away. The R subunit is required for both endonuclease and ATPase activities but not for modification. After locating a non-methylated recognition site, the enzyme complex serves as a molecular motor that translocates DNA in an ATP-dependent manner until a collision occurs that triggers cleavage. In Methanocaldococcus jannaschii (strain ATCC 43067 / DSM 2661 / JAL-1 / JCM 10045 / NBRC 100440) (Methanococcus jannaschii), this protein is Putative type I restriction enzyme MjaVIIP endonuclease subunit.